Reading from the N-terminus, the 330-residue chain is Fructose-1,6-bisphosphatase class 1 (330 aa).

Residues glutamate 84, aspartate 103, leucine 105, and aspartate 106 each coordinate Mg(2+). Substrate is bound by residues 106-109, asparagine 196, and lysine 262; that span reads DGSS. Glutamate 268 provides a ligand contact to Mg(2+).

It belongs to the FBPase class 1 family. Homotetramer. Mg(2+) serves as cofactor.

It localises to the cytoplasm. It carries out the reaction beta-D-fructose 1,6-bisphosphate + H2O = beta-D-fructose 6-phosphate + phosphate. It participates in carbohydrate biosynthesis; gluconeogenesis. In Shewanella sp. (strain MR-7), this protein is Fructose-1,6-bisphosphatase class 1.